The sequence spans 884 residues: Formin-like protein 11 (884 aa).

A signal peptide spans 1–18; the sequence is MVYFRQIFLMIIVVSLHC. The disordered stretch occupies residues 89 to 143; sequence AESASFSPWPAPSPSPFPNGGPIESPAYPPAPPRPIPPHLRRPLPQRTHPLEQPE. 2 stretches are compositionally biased toward pro residues: residues 97–107 and 115–126; these read WPAPSPSPFPN and AYPPAPPRPIPP. A helical transmembrane segment spans residues 158 to 178; it reads ILVPVVASTASAIGFVVCVVG. Disordered regions lie at residues 307 to 384, 416 to 469, and 512 to 532; these read SSDD…FSNK, SFPI…APLP, and MQSS…GKHL. A compositionally biased stretch (low complexity) spans 329–343; that stretch reads SNASSASGSVNVGSS. A compositionally biased stretch (basic and acidic residues) spans 346-358; sequence FSEHKLDIPECSR. Pro residues-rich tracts occupy residues 367–379 and 425–436; these read APPP…PPLP and QPRPPPPPPPPQ. Residues 461–884 form the FH2 domain; it reads LGKDGAPLPK…NSPSPLAPFR (424 aa).

This sequence belongs to the formin-like family. Class-I subfamily.

Its subcellular location is the membrane. In terms of biological role, might be involved in the organization and polarity of the actin cytoskeleton. In Arabidopsis thaliana (Mouse-ear cress), this protein is Formin-like protein 11 (FH11).